The following is a 387-amino-acid chain: MLPDLAEALQQRRQEGLYRFRQVLEGPQSPRVTIDGRDFLAFCSNDYLGLANHPALIEAVAAGAQRYGVGSGASHLISGHSRAHHELEEALAEFVGLPRTLLFSTGYMANMAVVTALMGREDAIFADRLNHASLNDAALLSRARFIRYPHLDLVTLEKQLKTIQARRRLIVTDAVFSMDGDRAPVAELLALCQRFDAWLLLDDAHGFGVLGEQGKGSLYDPQEVERNVPHLIYMATLGKAAGVSGAFVAAQASMIETLIQHSRTYGYTTAAAPLLAHALLTSLQLISQGVWRRERLVQLIEQLRQKLQSLPWQLLLSDTPIQPLLVGGSREAVRLDQALRERGIWVPAIRPPTVPQGMARLRISLSAAHAGEDVDQLSAALHDLAGC.

Arg19 lines the substrate pocket. Gly106–Tyr107 is a binding site for pyridoxal 5'-phosphate. His131 is a substrate binding site. Pyridoxal 5'-phosphate-binding residues include Ser177, His205, and Thr236. Position 239 is an N6-(pyridoxal phosphate)lysine (Lys239). Residue Thr353 participates in substrate binding.

It belongs to the class-II pyridoxal-phosphate-dependent aminotransferase family. BioF subfamily. In terms of assembly, homodimer. The cofactor is pyridoxal 5'-phosphate.

It catalyses the reaction 6-carboxyhexanoyl-[ACP] + L-alanine + H(+) = (8S)-8-amino-7-oxononanoate + holo-[ACP] + CO2. It participates in cofactor biosynthesis; biotin biosynthesis. Functionally, catalyzes the decarboxylative condensation of pimeloyl-[acyl-carrier protein] and L-alanine to produce 8-amino-7-oxononanoate (AON), [acyl-carrier protein], and carbon dioxide. This Nitrosomonas eutropha (strain DSM 101675 / C91 / Nm57) protein is 8-amino-7-oxononanoate synthase.